A 77-amino-acid chain; its full sequence is MLIKVKTLTGKEIELDIEPNDRVERIKEKVEEKEGIPPPQQRLIFAGKQMNDDKTAADYKVLGGSVLHLVLALRGGF.

Residues 70–72 (VLA) form an interaction with uba-3 region. A Glycyl lysine isopeptide (Gly-Lys) (interchain with K-? in acceptor proteins) cross-link involves residue G76. A propeptide is located at residue F77.

The protein belongs to the ubiquitin family. As to quaternary structure, interacts with dcn-1. Covalently attached to cullins. May interact with atx-3. In terms of processing, cleavage of precursor form is necessary for function.

The protein resides in the nucleus. It is found in the cytoplasm. Ubiquitin-like protein which plays an important role in cell cycle control and embryogenesis. Covalent attachment to its substrates requires prior activation by the E1 complex uba-3-ula-1 and linkage to the E2 enzyme ubc-12. Attachment of ned-8 to cullins activates their associated E3 ubiquitin ligase activity, and thus promotes polyubiquitination and proteasomal degradation of cyclins and other regulatory proteins. The chain is Ubiquitin-like protein NEDD8 (ned-8) from Caenorhabditis elegans.